The sequence spans 1341 residues: WD repeat-containing protein 19 (1341 aa).

WD repeat units lie at residues 11–51 (SWLG…RSEI), 52–92 (SLPG…TSQL), 95–134 (GMRD…KIPV), 137–175 (KHTK…IRQT), 273–311 (DHKD…DMYA), and 317–356 (DENK…LGDA). 6 TPR repeats span residues 736-769 (AQDL…AKRL), 775-808 (PFIS…DNKE), 840-873 (RVLK…DRAA), 895-928 (PKIH…NSVI), 951-984 (LDGA…NEAF), and 1020-1053 (EKRH…EDNV).

As to quaternary structure, component of the IFT complex A (IFT-A) complex. IFT-A complex is divided into a core subcomplex composed of IFT122:IFT140:WDR19 which is associated with TULP3 and a peripheral subcomplex composed of IFT43:WDR35:TTC21B. Interacts (via C-terminal region) with IFT122 (via C-terminal region). Interacts with BBS1. Interacts with TTC25. As to expression, tissue-specific expression of isoforms. Expressed in the prostate, testis, epididymis, submaxillary and salivary glands. Expressed in ependymal cells lining brain ventricles (at protein level).

Its subcellular location is the cell projection. The protein localises to the cilium. It localises to the cytoplasm. It is found in the cytoskeleton. The protein resides in the cilium basal body. Its subcellular location is the photoreceptor outer segment. The protein localises to the flagellum. As component of the IFT complex A (IFT-A), a complex required for retrograde ciliary transport and entry into cilia of G protein-coupled receptors (GPCRs), it is involved in cilia function and/or assembly. Essential for functional IFT-A assembly and ciliary entry of GPCRs. Associates with the BBSome complex to mediate ciliary transport. This chain is WD repeat-containing protein 19, found in Mus musculus (Mouse).